The following is a 553-amino-acid chain: Peroxiredoxin-2A (553 aa).

Positions 4–160 (IDVGDFVPDG…LMKMTTTTMS (157 aa)) constitute a Thioredoxin domain. Cys51 (cysteine sulfenic acid (-SOH) intermediate) is an active-site residue. The region spanning 156–201 (TTTMSNLPTDLLEEIISRVPRKYMRAVRLTCKRWNGMFKSQSFTKM) is the F-box domain.

This sequence belongs to the peroxiredoxin family. Prx5 subfamily. In terms of assembly, monomer.

The catalysed reaction is [glutaredoxin]-dithiol + a hydroperoxide = [glutaredoxin]-disulfide + an alcohol + H2O. Functionally, thiol-specific peroxidase that catalyzes the reduction of hydrogen peroxide and organic hydroperoxides to water and alcohols, respectively. Plays a role in cell protection against oxidative stress by detoxifying peroxides. May be involved in intracellular redox signaling. The sequence is that of Peroxiredoxin-2A (PRXIIA) from Arabidopsis thaliana (Mouse-ear cress).